The chain runs to 319 residues: Ankyrin repeat domain-containing protein 1 (319 aa).

Residues glutamate 63–isoleucine 89 are a coiled coil. ANK repeat units follow at residues tyrosine 152 to phenylalanine 181, leucine 185 to alanine 214, leucine 218 to alanine 247, glutamate 251 to valine 280, and alanine 284 to arginine 315.

In terms of assembly, interacts with TTN/titin and YBX1. Expressed in heart. In postnatal neonatal heart, it is expressed in an asymmetrical way; left ventricle favored towards right ventricle. Whether or not this could be correlated with a hypertrophic heart is still a matter of debate. Levels increase gradually from newborn to adult.

Its subcellular location is the nucleus. May play an important role in endothelial cell activation. May act as a nuclear transcription factor that negatively regulates the expression of cardiac genes. In Sus scrofa (Pig), this protein is Ankyrin repeat domain-containing protein 1 (ANKRD1).